The chain runs to 73 residues: Translation initiation factor IF-1 (73 aa).

An S1-like domain is found at 1–72; it reads MAKEDVIEVE…TKGRITYRFI (72 aa).

The protein belongs to the IF-1 family. As to quaternary structure, component of the 30S ribosomal translation pre-initiation complex which assembles on the 30S ribosome in the order IF-2 and IF-3, IF-1 and N-formylmethionyl-tRNA(fMet); mRNA recruitment can occur at any time during PIC assembly.

It localises to the cytoplasm. In terms of biological role, one of the essential components for the initiation of protein synthesis. Stabilizes the binding of IF-2 and IF-3 on the 30S subunit to which N-formylmethionyl-tRNA(fMet) subsequently binds. Helps modulate mRNA selection, yielding the 30S pre-initiation complex (PIC). Upon addition of the 50S ribosomal subunit IF-1, IF-2 and IF-3 are released leaving the mature 70S translation initiation complex. This chain is Translation initiation factor IF-1, found in Lactobacillus johnsonii (strain CNCM I-12250 / La1 / NCC 533).